A 189-amino-acid polypeptide reads, in one-letter code: Chitin synthase 1 (189 aa).

It belongs to the chitin synthase family. Class I subfamily.

It localises to the cell membrane. The catalysed reaction is [(1-&gt;4)-N-acetyl-beta-D-glucosaminyl](n) + UDP-N-acetyl-alpha-D-glucosamine = [(1-&gt;4)-N-acetyl-beta-D-glucosaminyl](n+1) + UDP + H(+). Functionally, polymerizes chitin, a structural polymer of the cell wall and septum, by transferring the sugar moiety of UDP-GlcNAc to the non-reducing end of the growing chitin polymer. This Aspergillus niger protein is Chitin synthase 1 (chs1).